The following is a 264-amino-acid chain: uncharacterized protein (264 aa).

3 stretches are compositionally biased toward polar residues: residues 1–18 (MFEN…SSRS), 73–83 (SLGSVGTTEVN), and 126–139 (KTTQ…QPVL). Disordered regions lie at residues 1-47 (MFEN…WVGS) and 68-264 (RKEP…LSFE). The span at 149 to 171 (SSGQPQVSSSAQPSPADASQPEA) shows a compositional bias: low complexity. A compositionally biased stretch (basic and acidic residues) spans 194-212 (LIHKDGQDDPKLKVTECRR). A phosphoserine mark is found at Ser-214, Ser-215, Ser-241, and Ser-250.

This is an uncharacterized protein from Bos taurus (Bovine).